The chain runs to 232 residues: Ribonuclease 3 (232 aa).

The 130-residue stretch at 5 to 134 folds into the RNase III domain; sequence QTVLKNHFEI…FLGALLLDKD (130 aa). Glu-47 serves as a coordination point for Mg(2+). The active site involves Asp-51. The Mg(2+) site is built by Asp-120 and Glu-123. The active site involves Glu-123. The DRBM domain occupies 160–229; that stretch reads DYKTHLQELL…AKNAVEKGLD (70 aa).

The protein belongs to the ribonuclease III family. In terms of assembly, homodimer. Mg(2+) is required as a cofactor.

It localises to the cytoplasm. The enzyme catalyses Endonucleolytic cleavage to 5'-phosphomonoester.. Digests double-stranded RNA. Involved in the processing of primary rRNA transcript to yield the immediate precursors to the large and small rRNAs (23S and 16S). Processes some mRNAs, and tRNAs when they are encoded in the rRNA operon. Processes pre-crRNA and tracrRNA of type II CRISPR loci if present in the organism. This is Ribonuclease 3 from Streptococcus pneumoniae (strain ATCC BAA-255 / R6).